The chain runs to 528 residues: GMP synthase [glutamine-hydrolyzing] (528 aa).

Positions 13 to 204 (AIVILDFGSQ…VYHVCGCDPD (192 aa)) constitute a Glutamine amidotransferase type-1 domain. C90 serves as the catalytic Nucleophile. Catalysis depends on residues H178 and E180. The GMPS ATP-PPase domain maps to 205-403 (WTTAAFIDEA…LGLPEEIVRR (199 aa)). 232–238 (SGGVDSS) provides a ligand contact to ATP.

Homodimer.

It catalyses the reaction XMP + L-glutamine + ATP + H2O = GMP + L-glutamate + AMP + diphosphate + 2 H(+). It functions in the pathway purine metabolism; GMP biosynthesis; GMP from XMP (L-Gln route): step 1/1. Catalyzes the synthesis of GMP from XMP. The sequence is that of GMP synthase [glutamine-hydrolyzing] from Synechococcus sp. (strain CC9605).